The chain runs to 54 residues: Large ribosomal subunit protein bL33A (54 aa).

It belongs to the bacterial ribosomal protein bL33 family.

The protein is Large ribosomal subunit protein bL33A of Mycobacteroides abscessus (strain ATCC 19977 / DSM 44196 / CCUG 20993 / CIP 104536 / JCM 13569 / NCTC 13031 / TMC 1543 / L948) (Mycobacterium abscessus).